The following is a 421-amino-acid chain: UPF0300 protein C737.04 (421 aa).

The protein belongs to the UPF0300 family.

It is found in the cytoplasm. This chain is UPF0300 protein C737.04, found in Schizosaccharomyces pombe (strain 972 / ATCC 24843) (Fission yeast).